An 87-amino-acid polypeptide reads, in one-letter code: MKTKLNELLEFPTPFTYKVMGLAKPELVDLVVEVVQRHAPGDYTPQVKPSSKGNYHSVSITINATHIEQVETLYEELGDIDIVRMVL.

It belongs to the UPF0250 family.

The protein is UPF0250 protein ESA_02696 of Cronobacter sakazakii (strain ATCC BAA-894) (Enterobacter sakazakii).